The following is a 1078-amino-acid chain: DNA-directed RNA polymerase subunit beta (1078 aa).

The protein belongs to the RNA polymerase beta chain family. As to quaternary structure, the minimal PEP RNA polymerase found in etioplasts (PEP-B) is composed of four subunits: alpha, beta, beta', and beta''. Following differentiation into chloroplasts the PEP-A RNA polymerase in this organism has been shown to be composed of at least 13 subunits, including the PEP-B subunits. When a (nuclear-encoded) sigma factor is associated with the core the holoenzyme is formed, which can initiate transcription.

It is found in the plastid. Its subcellular location is the chloroplast. The catalysed reaction is RNA(n) + a ribonucleoside 5'-triphosphate = RNA(n+1) + diphosphate. Functionally, DNA-dependent RNA polymerase catalyzes the transcription of DNA into RNA using the four ribonucleoside triphosphates as substrates. The sequence is that of DNA-directed RNA polymerase subunit beta (rpoB) from Sinapis alba (White mustard).